A 58-amino-acid polypeptide reads, in one-letter code: Large ribosomal subunit protein eL24 (58 aa).

Residues Cys-6, Cys-9, Cys-32, and Cys-36 each coordinate Zn(2+). The segment at 6-36 (CSFCGAEIPPGYGIMYVRNDGTIQRYCSRKC) adopts a C4-type zinc-finger fold.

The protein belongs to the eukaryotic ribosomal protein eL24 family. As to quaternary structure, part of the 50S ribosomal subunit. Forms a cluster with proteins L3 and L14. Zn(2+) is required as a cofactor.

Functionally, binds to the 23S rRNA. In Pyrobaculum neutrophilum (strain DSM 2338 / JCM 9278 / NBRC 100436 / V24Sta) (Thermoproteus neutrophilus), this protein is Large ribosomal subunit protein eL24.